A 149-amino-acid polypeptide reads, in one-letter code: Endoribonuclease YbeY (149 aa).

The Zn(2+) site is built by His112, His116, and His122.

The protein belongs to the endoribonuclease YbeY family. It depends on Zn(2+) as a cofactor.

The protein localises to the cytoplasm. In terms of biological role, single strand-specific metallo-endoribonuclease involved in late-stage 70S ribosome quality control and in maturation of the 3' terminus of the 16S rRNA. The chain is Endoribonuclease YbeY from Methylibium petroleiphilum (strain ATCC BAA-1232 / LMG 22953 / PM1).